The chain runs to 430 residues: 3-oxo-tetronate kinase (430 aa).

ATP-binding positions include S268, 366–369 (GGET), and G410.

It belongs to the four-carbon acid sugar kinase family.

The enzyme catalyses 3-dehydro-L-erythronate + ATP = 3-dehydro-4-O-phospho-L-erythronate + ADP + H(+). The catalysed reaction is 3-dehydro-D-erythronate + ATP = 3-dehydro-4-O-phospho-D-erythronate + ADP + H(+). In terms of biological role, catalyzes the ATP-dependent phosphorylation of 3-oxo-tetronate to 3-oxo-tetronate 4-phosphate. The sequence is that of 3-oxo-tetronate kinase from Pseudomonas fluorescens (strain ATCC BAA-477 / NRRL B-23932 / Pf-5).